We begin with the raw amino-acid sequence, 143 residues long: 3-hydroxyacyl-[acyl-carrier-protein] dehydratase FabZ (143 aa).

His-48 is a catalytic residue.

The protein belongs to the thioester dehydratase family. FabZ subfamily.

Its subcellular location is the cytoplasm. The catalysed reaction is a (3R)-hydroxyacyl-[ACP] = a (2E)-enoyl-[ACP] + H2O. Involved in unsaturated fatty acids biosynthesis. Catalyzes the dehydration of short chain beta-hydroxyacyl-ACPs and long chain saturated and unsaturated beta-hydroxyacyl-ACPs. The chain is 3-hydroxyacyl-[acyl-carrier-protein] dehydratase FabZ from Roseiflexus castenholzii (strain DSM 13941 / HLO8).